A 288-amino-acid polypeptide reads, in one-letter code: L-xylulose reductase (288 aa).

Positions 39, 113, and 147 each coordinate NADP(+). Serine 181 acts as the Proton donor in catalysis. Residues tyrosine 196, lysine 200, isoleucine 228, and threonine 230 each coordinate NADP(+). Residue tyrosine 196 is the Proton acceptor of the active site. The active-site Lowers pKa of active site Tyr is the lysine 200.

It belongs to the short-chain dehydrogenases/reductases (SDR) family.

It carries out the reaction xylitol + NADP(+) = L-xylulose + NADPH + H(+). The protein operates within carbohydrate degradation; L-arabinose degradation via L-arabinitol; D-xylulose 5-phosphate from L-arabinose (fungal route): step 3/5. L-xylulose reductase involved in the catabolism of L-arabinose through an oxidoreductive pathway. Catalyzes the NADPH-dependent reduction of L-xylulose. Is also able to convert D-xylulose, D-ribulose, L-sorbose, and D-fructose to their corresponding polyols. The protein is L-xylulose reductase of Hypocrea jecorina (strain QM6a) (Trichoderma reesei).